A 122-amino-acid chain; its full sequence is Large ribosomal subunit protein uL14 (122 aa).

This sequence belongs to the universal ribosomal protein uL14 family. In terms of assembly, part of the 50S ribosomal subunit. Forms a cluster with proteins L3 and L19. In the 70S ribosome, L14 and L19 interact and together make contacts with the 16S rRNA in bridges B5 and B8.

Its function is as follows. Binds to 23S rRNA. Forms part of two intersubunit bridges in the 70S ribosome. The sequence is that of Large ribosomal subunit protein uL14 from Halorhodospira halophila (strain DSM 244 / SL1) (Ectothiorhodospira halophila (strain DSM 244 / SL1)).